The sequence spans 514 residues: MQQLNPSEISEIIKGRIEKLDVASQARNEGTIVSVSDGIVRIYGLADVMYGEMIEFPGGVYGMALNLEQDSVGAVVLGEYQGLAEGMNAKCTGRILEVPVGPELLGRVVDALGNPIDGKGPIDAKATDAVEKVAPGVIWRKSVDQPVQTGYKSVDAMIPVGRGQRELIIGDRQIGKTALAVDAIINQKDSGIKCVYVAIGQKQSTIANVVRKLEENGALANTIVVAASASESAALQYLAPYSGCTMGEYFRDRGEDALIVYDDLSKQAVAYRQISLLLRRPPGREAYPGDVFYLHSRLLERASRVSEEYVEKFTNGAVTGKTGSLTALPIIETQAGDVSAFVPTNVISITDGQIFLESAMFNSGIRPAVNAGISVSRVGGAAQTKIIKKLSGGIRTALAQYRELAAFAQFASDLDEATRKQLEHGQRVTELMKQKQYAPMSIAEMSLSLYAAERGFLQDVEIAKVGSFEQALISYFQREHAALLAKINEKGDFNDEIDAGIKAGIEKFKATQTW.

170–177 provides a ligand contact to ATP; the sequence is GDRQIGKT.

It belongs to the ATPase alpha/beta chains family. In terms of assembly, F-type ATPases have 2 components, CF(1) - the catalytic core - and CF(0) - the membrane proton channel. CF(1) has five subunits: alpha(3), beta(3), gamma(1), delta(1), epsilon(1). CF(0) has three main subunits: a(1), b(2) and c(9-12). The alpha and beta chains form an alternating ring which encloses part of the gamma chain. CF(1) is attached to CF(0) by a central stalk formed by the gamma and epsilon chains, while a peripheral stalk is formed by the delta and b chains.

It is found in the cell inner membrane. The enzyme catalyses ATP + H2O + 4 H(+)(in) = ADP + phosphate + 5 H(+)(out). Its function is as follows. Produces ATP from ADP in the presence of a proton gradient across the membrane. The alpha chain is a regulatory subunit. The polypeptide is ATP synthase subunit alpha (Pseudomonas aeruginosa (strain LESB58)).